The primary structure comprises 184 residues: Photosystem I assembly protein Ycf4 (184 aa).

Helical transmembrane passes span 22-42 (FCWA…GTSS) and 57-77 (IIFF…LFIS).

It belongs to the Ycf4 family.

It localises to the plastid. The protein localises to the chloroplast thylakoid membrane. Its function is as follows. Seems to be required for the assembly of the photosystem I complex. This chain is Photosystem I assembly protein Ycf4, found in Olimarabidopsis pumila (Dwarf rocket).